The following is a 702-amino-acid chain: Penicillin-binding protein activator LpoA (702 aa).

The first 26 residues, methionine 1–glycine 26, serve as a signal peptide directing secretion. Cysteine 27 is lipidated: N-palmitoyl cysteine. The S-diacylglycerol cysteine moiety is linked to residue cysteine 27. The tract at residues glycine 327 to proline 378 is disordered. Over residues alanine 330–proline 378 the composition is skewed to low complexity.

It belongs to the LpoA family. In terms of assembly, interacts with PBP1a.

It localises to the cell outer membrane. In terms of biological role, regulator of peptidoglycan synthesis that is essential for the function of penicillin-binding protein 1A (PBP1a). This chain is Penicillin-binding protein activator LpoA, found in Klebsiella pneumoniae subsp. pneumoniae (strain ATCC 700721 / MGH 78578).